The chain runs to 552 residues: Asparagine--tRNA ligase, cytoplasmic (552 aa).

Residues 1-23 (MSQVYVNEKTGADSTDVSGSEQQ) form a disordered region. A compositionally biased stretch (polar residues) spans 12-23 (ADSTDVSGSEQQ).

It belongs to the class-II aminoacyl-tRNA synthetase family.

It is found in the cytoplasm. The enzyme catalyses tRNA(Asn) + L-asparagine + ATP = L-asparaginyl-tRNA(Asn) + AMP + diphosphate + H(+). The sequence is that of Asparagine--tRNA ligase, cytoplasmic (DED81) from Debaryomyces hansenii (strain ATCC 36239 / CBS 767 / BCRC 21394 / JCM 1990 / NBRC 0083 / IGC 2968) (Yeast).